Here is a 450-residue protein sequence, read N- to C-terminus: Keratin, type I cytoskeletal 25 (450 aa).

A compositionally biased stretch (low complexity) spans 1-23 (MSLRLSSASRRSCPRPTTGSLRL). A disordered region spans residues 1-26 (MSLRLSSASRRSCPRPTTGSLRLSGG). Positions 1–78 (MSLRLSSASR…VNERGLLSGN (78 aa)) are head. Residues 79-114 (EKVTMQNLNDRLASYLDSVHALEEANADLEQKIKGW) are coil 1A. One can recognise an IF rod domain in the interval 79-394 (EKVTMQNLND…LLIGGDDGAC (316 aa)). The linker 1 stretch occupies residues 115 to 136 (YEKFGPGSCRGLDHDYSRYFPI). The interval 137-228 (IDDLKNQIIA…KNHKEEMQVL (92 aa)) is coil 1B. The segment at 229–251 (QCAAGGNVNVEMNAAPGVDLTVL) is linker 12. The interval 252 to 390 (LNNMRAEYEA…ETYCLLIGGD (139 aa)) is coil 2. Residues 391 to 450 (DGACKSGGYKSKDYGSGNVGSQVKDSAKAIVVKKVLEEVDQRSKILTTRLRSLEEKSQSN) form a tail region. Ser442 carries the phosphoserine modification.

This sequence belongs to the intermediate filament family. As to quaternary structure, heterodimer of a type I and a type II keratin. Heterodimer with type II keratin KRT5 leading to the formation of keratin intermediate filament (KIF) network. Interacts with KRT6A to form filaments.

The protein localises to the cytoplasm. Essential for the proper assembly of type I and type II keratin protein complexes and formation of keratin intermediate filaments in the inner root sheath (irs). Plays a role in the cytoskeleton organization. In Pan troglodytes (Chimpanzee), this protein is Keratin, type I cytoskeletal 25 (KRT25).